The primary structure comprises 812 residues: Valine--tRNA ligase (812 aa).

The short motif at 46-56 is the 'HIGH' region element; the sequence is PTVSGQLHIGH. A 'KMSKS' region motif is present at residues 536-540; sequence KMSKS. Residue K539 participates in ATP binding.

The protein belongs to the class-I aminoacyl-tRNA synthetase family. ValS type 2 subfamily. Monomer.

It is found in the cytoplasm. It carries out the reaction tRNA(Val) + L-valine + ATP = L-valyl-tRNA(Val) + AMP + diphosphate. Catalyzes the attachment of valine to tRNA(Val). As ValRS can inadvertently accommodate and process structurally similar amino acids such as threonine, to avoid such errors, it has a 'posttransfer' editing activity that hydrolyzes mischarged Thr-tRNA(Val) in a tRNA-dependent manner. This chain is Valine--tRNA ligase, found in Rickettsia bellii (strain OSU 85-389).